We begin with the raw amino-acid sequence, 545 residues long: Membrane protein insertase YidC (545 aa).

Helical transmembrane passes span 10–30 (AVYL…FLFS), 319–339 (LLYF…NVIP), 341–361 (WGLS…PLTF), 407–427 (IGGC…YGLV), 467–487 (ILPF…SNVS), and 502–522 (MPIM…IYWI).

The protein belongs to the OXA1/ALB3/YidC family. Type 1 subfamily. As to quaternary structure, interacts with the Sec translocase complex via SecD. Specifically interacts with transmembrane segments of nascent integral membrane proteins during membrane integration.

The protein resides in the cell inner membrane. Its function is as follows. Required for the insertion and/or proper folding and/or complex formation of integral membrane proteins into the membrane. Involved in integration of membrane proteins that insert both dependently and independently of the Sec translocase complex, as well as at least some lipoproteins. Aids folding of multispanning membrane proteins. In Borrelia recurrentis (strain A1), this protein is Membrane protein insertase YidC.